The sequence spans 899 residues: RNA-binding motif protein 25 (899 aa).

Positions 1–20 (MADESSSPATGDPNSQKPES) are enriched in polar residues. Residues 1 to 112 (MADESSSPAT…SMPQYQPQPG (112 aa)) are disordered. Residues 26 to 63 (IPNPNPNPSLTPPPPQQHSQPPVAPLVPPGPPYAPPAQ) show a composition bias toward pro residues. The RRM domain occupies 204-281 (TTIYIGKIAT…QELLVNVNQA (78 aa)). 2 disordered regions span residues 298-572 (KKAK…EQNL) and 611-778 (GESA…KESG). Basic and acidic residues-rich tracts occupy residues 317-340 (EQDKLESADNETGKDGESKIKENI) and 354-372 (EADREAMEKIETAIEERLK). Residues 375-384 (PLPPPPPPPA) show a composition bias toward pro residues. Over residues 430-505 (WSKRNDRRSR…QYEKEKEKEK (76 aa)) the composition is skewed to basic and acidic residues. Residues 434–578 (NDRRSRERGE…EQNLQQQQLD (145 aa)) adopt a coiled-coil conformation. The segment covering 515–524 (YEEEEEEDDD) has biased composition (acidic residues). Positions 526-533 (SRRRWHRA) match the Nuclear localization signal 1 motif. Residues 533-568 (AALDERRRRQLREKEDDLADRLKEEEEVAEAKRSAE) show a composition bias toward basic and acidic residues. The span at 626–640 (GSGNESMAIDNNSGS) shows a compositional bias: polar residues. Basic and acidic residues-rich tracts occupy residues 723–733 (PKEETIETEKQ) and 740–778 (DKASHRDRERERERDRDRDRVRDRGDGHSGPTKDAKESG). Residues 735–742 (SRRSHDKA) carry the Nuclear localization signal 2 motif. The region spanning 802-899 (EDLFSYEINW…EAGVPVKSKA (98 aa)) is the PWI domain.

Specifically associates with functional splicing complexes. Associates with exon junction complex (EJC) proteins. In terms of processing, phosphorylated; the phosphorylation level is repressed by abscisic acid (ABA).

Its subcellular location is the nucleus. Functionally, RNA-binding protein that acts as a regulator of alternative pre-mRNA splicing. Negative regulator of responses to abscisic acid (ABA), including in early development. The sequence is that of RNA-binding motif protein 25 from Arabidopsis thaliana (Mouse-ear cress).